Here is a 331-residue protein sequence, read N- to C-terminus: Cytosolic sulfotransferase 8 (331 aa).

Over residues 1-11 (MGEKDIPRNLK) the composition is skewed to basic and acidic residues. The disordered stretch occupies residues 1 to 31 (MGEKDIPRNLKEEEEEEEENQSEETKSLISS). A compositionally biased stretch (acidic residues) spans 12 to 22 (EEEEEEEENQS). 80–85 (KSGTTW) is a 3'-phosphoadenylyl sulfate binding site. His145 functions as the Proton acceptor in the catalytic mechanism. 3'-phosphoadenylyl sulfate contacts are provided by residues Arg167, Ser175, Tyr231, and 297–299 (RKG).

The protein belongs to the sulfotransferase 1 family. As to expression, expressed in seedlings and roots.

It localises to the cytoplasm. Functionally, sulfotransferase that utilizes 3'-phospho-5'-adenylyl sulfate (PAPS) as sulfonate donor. No activity with brassinosteroids. This Arabidopsis thaliana (Mouse-ear cress) protein is Cytosolic sulfotransferase 8 (SOT8).